The following is a 573-amino-acid chain: Sulfite oxidase, mitochondrial (573 aa).

A mitochondrion-targeting transit peptide spans 1 to 34; it reads MRLLRPSWAGLLRGRHHQHQRHHRRLLLTTSRGS. Residues 14-26 are compositionally biased toward basic residues; that stretch reads GRHHQHQRHHRRL. Residues 14-50 form a disordered region; that stretch reads GRHHQHQRHHRRLLLTTSRGSNGEREEQQHSQWSSPG. One can recognise a Cytochrome b5 heme-binding domain in the interval 108–186; it reads LPTYRAEEVE…LEGFRIGNLE (79 aa). Heme b is bound by residues His144 and His168. The hinge stretch occupies residues 190 to 199; the sequence is VTNVDDELGS. The tract at residues 200-423 is moco domain; sequence PWSQEPQRHA…DSHWQQNDYK (224 aa). Residues 240–244, Cys287, Asp344, His383, Arg388, and 399–401 each bind Mo-molybdopterin; these read YVRNH and NVK. The tract at residues 424 to 567 is homodimerization; that stretch reads GFSPSTDWDT…RGVLANAYHK (144 aa).

It depends on heme b as a cofactor. Requires Mo-molybdopterin as cofactor. In terms of tissue distribution, expressed in the ensheathing glia with relatively weak expression in the CNS cortex (at protein level).

The protein localises to the mitochondrion intermembrane space. The catalysed reaction is sulfite + O2 + H2O = sulfate + H2O2. It participates in energy metabolism; sulfur metabolism. Functionally, required in ensheathing glial cells for normal larval locomotion. Oxidizes sulfite which is required to maintain glutamate homeostasis and as a consequence, neuronal network function. In Drosophila melanogaster (Fruit fly), this protein is Sulfite oxidase, mitochondrial.